A 209-amino-acid chain; its full sequence is Small ribosomal subunit protein uS5 (209 aa).

The S5 DRBM domain maps to 48–111; it reads LEDEVLDINM…DAAKLNITYI (64 aa).

Belongs to the universal ribosomal protein uS5 family. Part of the 30S ribosomal subunit. Contacts protein S4.

With S4 and S12 plays an important role in translational accuracy. The sequence is that of Small ribosomal subunit protein uS5 from Methanosarcina acetivorans (strain ATCC 35395 / DSM 2834 / JCM 12185 / C2A).